Here is a 428-residue protein sequence, read N- to C-terminus: D-serine dehydratase (428 aa).

K57 bears the N6-(pyridoxal phosphate)lysine mark. Residues Y203, Y210, T255, G286, and N287 each contribute to the pyridoxal 5'-phosphate site. H398 and C400 together coordinate Zn(2+).

It belongs to the DSD1 family. Homodimer. Pyridoxal 5'-phosphate is required as a cofactor. The cofactor is Zn(2+).

It catalyses the reaction D-serine = pyruvate + NH4(+). With respect to regulation, sodium cyanoborohydride, N-ethylmaleimide, hydroxylamine, phenyhydrazin and EDTA are inhibitors of the catalytic activity. In terms of biological role, catalyzes the conversion of D-serine to pyruvate and ammonia. May play a role in D-serine detoxification. The protein is D-serine dehydratase of Saccharomyces cerevisiae (strain ATCC 204508 / S288c) (Baker's yeast).